Consider the following 159-residue polypeptide: Transcriptional repressor NrdR (159 aa).

The segment at 3–34 (CPKCGYNKSSVVDSRQAEEGTTIRRRRECEKC) is a zinc-finger region. Residues 49 to 139 (LLVIKKDGTR…VYKSFKDVDE (91 aa)) form the ATP-cone domain.

Belongs to the NrdR family. The cofactor is Zn(2+).

Negatively regulates transcription of bacterial ribonucleotide reductase nrd genes and operons by binding to NrdR-boxes. This is Transcriptional repressor NrdR from Streptococcus agalactiae serotype Ia (strain ATCC 27591 / A909 / CDC SS700).